The following is a 282-amino-acid chain: tRNA (guanine-N(1)-)-methyltransferase (282 aa).

The tract at residues 77 to 114 (TGPAATVSDLESSAEHKRNLRPATTNGDAEPLGEKAGG) is disordered. Residues G149 and 173 to 178 (IGDYVL) each bind S-adenosyl-L-methionine.

The protein belongs to the RNA methyltransferase TrmD family. Homodimer.

Its subcellular location is the cytoplasm. It catalyses the reaction guanosine(37) in tRNA + S-adenosyl-L-methionine = N(1)-methylguanosine(37) in tRNA + S-adenosyl-L-homocysteine + H(+). In terms of biological role, specifically methylates guanosine-37 in various tRNAs. This chain is tRNA (guanine-N(1)-)-methyltransferase, found in Corynebacterium jeikeium (strain K411).